Consider the following 300-residue polypeptide: Ribosomal protein L11 methyltransferase (300 aa).

Residues T152, G173, D195, and N234 each coordinate S-adenosyl-L-methionine.

This sequence belongs to the methyltransferase superfamily. PrmA family.

It localises to the cytoplasm. The catalysed reaction is L-lysyl-[protein] + 3 S-adenosyl-L-methionine = N(6),N(6),N(6)-trimethyl-L-lysyl-[protein] + 3 S-adenosyl-L-homocysteine + 3 H(+). Methylates ribosomal protein L11. The chain is Ribosomal protein L11 methyltransferase from Burkholderia ambifaria (strain MC40-6).